The sequence spans 297 residues: 4-hydroxy-tetrahydrodipicolinate synthase (297 aa).

Residue Thr-50 coordinates pyruvate. Tyr-139 (proton donor/acceptor) is an active-site residue. The Schiff-base intermediate with substrate role is filled by Lys-167. Val-209 lines the pyruvate pocket.

The protein belongs to the DapA family. In terms of assembly, homotetramer; dimer of dimers.

The protein resides in the cytoplasm. It catalyses the reaction L-aspartate 4-semialdehyde + pyruvate = (2S,4S)-4-hydroxy-2,3,4,5-tetrahydrodipicolinate + H2O + H(+). Its pathway is amino-acid biosynthesis; L-lysine biosynthesis via DAP pathway; (S)-tetrahydrodipicolinate from L-aspartate: step 3/4. Catalyzes the condensation of (S)-aspartate-beta-semialdehyde [(S)-ASA] and pyruvate to 4-hydroxy-tetrahydrodipicolinate (HTPA). The sequence is that of 4-hydroxy-tetrahydrodipicolinate synthase from Microcystis aeruginosa (strain NIES-843 / IAM M-2473).